A 358-amino-acid polypeptide reads, in one-letter code: Alanine racemase (358 aa).

Catalysis depends on Lys-35, which acts as the Proton acceptor; specific for D-alanine. Lys-35 is subject to N6-(pyridoxal phosphate)lysine. Arg-130 is a substrate binding site. The active-site Proton acceptor; specific for L-alanine is Tyr-255. Met-303 contacts substrate.

It belongs to the alanine racemase family. Requires pyridoxal 5'-phosphate as cofactor.

It catalyses the reaction L-alanine = D-alanine. It functions in the pathway amino-acid biosynthesis; D-alanine biosynthesis; D-alanine from L-alanine: step 1/1. In terms of biological role, catalyzes the interconversion of L-alanine and D-alanine. May also act on other amino acids. This chain is Alanine racemase (alr), found in Shewanella sp. (strain ANA-3).